A 640-amino-acid polypeptide reads, in one-letter code: Tyrosine--tRNA ligase, mitochondrial (640 aa).

Tyr-100 serves as a coordination point for L-tyrosine. Asp-104 is a binding site for ATP. The 'HIGH' region motif lies at 105–114 (PTAPSLHIGH). L-tyrosine contacts are provided by Asp-144, Tyr-248, Gln-252, Asp-255, and Gln-274. Residues 322-326 (KFGKS) carry the 'KMSKS' region motif. Residue Lys-325 coordinates ATP.

It belongs to the class-I aminoacyl-tRNA synthetase family.

The protein localises to the mitochondrion matrix. The catalysed reaction is tRNA(Tyr) + L-tyrosine + ATP = L-tyrosyl-tRNA(Tyr) + AMP + diphosphate + H(+). Has both an aminoacyl-tRNA synthetase activity and is involved in the splicing of group I introns. This Podospora anserina (Pleurage anserina) protein is Tyrosine--tRNA ligase, mitochondrial (YTS1).